Consider the following 510-residue polypeptide: GMP synthase [glutamine-hydrolyzing] (510 aa).

In terms of domain architecture, Glutamine amidotransferase type-1 spans 5–194 (DILVLDFGSQ…FAKICGCEST (190 aa)). The active-site Nucleophile is Cys-82. Residues His-169 and Glu-171 contribute to the active site. The region spanning 195–385 (WNMGSFAKKE…LGLSRDIVYR (191 aa)) is the GMPS ATP-PPase domain. Residue 222–228 (SGGVDSS) coordinates ATP.

Homodimer.

The catalysed reaction is XMP + L-glutamine + ATP + H2O = GMP + L-glutamate + AMP + diphosphate + 2 H(+). Its pathway is purine metabolism; GMP biosynthesis; GMP from XMP (L-Gln route): step 1/1. Functionally, catalyzes the synthesis of GMP from XMP. This is GMP synthase [glutamine-hydrolyzing] from Campylobacter fetus subsp. fetus (strain 82-40).